Consider the following 363-residue polypeptide: UDP-3-O-acylglucosamine N-acyltransferase (363 aa).

Histidine 237 functions as the Proton acceptor in the catalytic mechanism. The segment at 338 to 363 (EQNSTDRAPNAKMLEVGVDPETTCSS) is disordered.

This sequence belongs to the transferase hexapeptide repeat family. LpxD subfamily. As to quaternary structure, homotrimer.

It catalyses the reaction a UDP-3-O-[(3R)-3-hydroxyacyl]-alpha-D-glucosamine + a (3R)-hydroxyacyl-[ACP] = a UDP-2-N,3-O-bis[(3R)-3-hydroxyacyl]-alpha-D-glucosamine + holo-[ACP] + H(+). The protein operates within bacterial outer membrane biogenesis; LPS lipid A biosynthesis. Functionally, catalyzes the N-acylation of UDP-3-O-acylglucosamine using 3-hydroxyacyl-ACP as the acyl donor. Is involved in the biosynthesis of lipid A, a phosphorylated glycolipid that anchors the lipopolysaccharide to the outer membrane of the cell. This is UDP-3-O-acylglucosamine N-acyltransferase from Synechococcus sp. (strain JA-2-3B'a(2-13)) (Cyanobacteria bacterium Yellowstone B-Prime).